Consider the following 76-residue polypeptide: Putative membrane protein insertion efficiency factor (76 aa).

Belongs to the UPF0161 family.

The protein resides in the cell inner membrane. In terms of biological role, could be involved in insertion of integral membrane proteins into the membrane. The polypeptide is Putative membrane protein insertion efficiency factor (Porphyromonas gingivalis (strain ATCC 33277 / DSM 20709 / CIP 103683 / JCM 12257 / NCTC 11834 / 2561)).